The chain runs to 648 residues: DNA ligase (648 aa).

Residues 30–34 (DEEYD), 79–80 (SM), and E108 contribute to the NAD(+) site. K110 functions as the N6-AMP-lysine intermediate in the catalytic mechanism. 4 residues coordinate NAD(+): R131, E165, K280, and K304. Residues C398, C401, C414, and C419 each coordinate Zn(2+). In terms of domain architecture, BRCT spans 573–648 (AKENPFKGKI…LTEDEMRAML (76 aa)).

This sequence belongs to the NAD-dependent DNA ligase family. LigA subfamily. Mg(2+) is required as a cofactor. The cofactor is Mn(2+).

The enzyme catalyses NAD(+) + (deoxyribonucleotide)n-3'-hydroxyl + 5'-phospho-(deoxyribonucleotide)m = (deoxyribonucleotide)n+m + AMP + beta-nicotinamide D-nucleotide.. DNA ligase that catalyzes the formation of phosphodiester linkages between 5'-phosphoryl and 3'-hydroxyl groups in double-stranded DNA using NAD as a coenzyme and as the energy source for the reaction. It is essential for DNA replication and repair of damaged DNA. This Sulfurovum sp. (strain NBC37-1) protein is DNA ligase.